Reading from the N-terminus, the 64-residue chain is Large ribosomal subunit protein bL35 (64 aa).

Polar residues predominate over residues 1–10; that stretch reads MPKMKTNSAA. A disordered region spans residues 1–64; the sequence is MPKMKTNSAA…SKNMKKLLGR (64 aa).

The protein belongs to the bacterial ribosomal protein bL35 family.

The polypeptide is Large ribosomal subunit protein bL35 (Bifidobacterium adolescentis (strain ATCC 15703 / DSM 20083 / NCTC 11814 / E194a)).